Here is a 351-residue protein sequence, read N- to C-terminus: Nicotinate-nucleotide--dimethylbenzimidazole phosphoribosyltransferase (351 aa).

Glu317 (proton acceptor) is an active-site residue.

The protein belongs to the CobT family.

The catalysed reaction is 5,6-dimethylbenzimidazole + nicotinate beta-D-ribonucleotide = alpha-ribazole 5'-phosphate + nicotinate + H(+). The protein operates within nucleoside biosynthesis; alpha-ribazole biosynthesis; alpha-ribazole from 5,6-dimethylbenzimidazole: step 1/2. Catalyzes the synthesis of alpha-ribazole-5'-phosphate from nicotinate mononucleotide (NAMN) and 5,6-dimethylbenzimidazole (DMB). The sequence is that of Nicotinate-nucleotide--dimethylbenzimidazole phosphoribosyltransferase from Pseudomonas putida (strain ATCC 47054 / DSM 6125 / CFBP 8728 / NCIMB 11950 / KT2440).